Consider the following 98-residue polypeptide: Feather beta keratin (98 aa).

Serine 2 is subject to N-acetylserine.

Belongs to the avian keratin family. As to quaternary structure, the avian keratins (F-ker, S-ker, C-ker and B-ker) are a complex mixture of very similar polypeptides.

This is Feather beta keratin from Mycteria americana (Wood stork).